The primary structure comprises 174 residues: Co-chaperone protein HscB homolog (174 aa).

One can recognise a J domain in the interval 2-74 (NYFELFKFSP…IRRAEHMLSL (73 aa)).

It belongs to the HscB family. In terms of assembly, interacts with HscA and stimulates its ATPase activity.

Co-chaperone involved in the maturation of iron-sulfur cluster-containing proteins. Seems to help targeting proteins to be folded toward HscA. The protein is Co-chaperone protein HscB homolog of Shewanella sp. (strain ANA-3).